The chain runs to 66 residues: DNA-directed RNA polymerase subunit Rpo10 (66 aa).

Residues Cys-7, Cys-10, Cys-44, and Cys-45 each contribute to the Zn(2+) site.

It belongs to the archaeal Rpo10/eukaryotic RPB10 RNA polymerase subunit family. In terms of assembly, part of the RNA polymerase complex. Requires Zn(2+) as cofactor.

Its subcellular location is the cytoplasm. It carries out the reaction RNA(n) + a ribonucleoside 5'-triphosphate = RNA(n+1) + diphosphate. DNA-dependent RNA polymerase (RNAP) catalyzes the transcription of DNA into RNA using the four ribonucleoside triphosphates as substrates. The polypeptide is DNA-directed RNA polymerase subunit Rpo10 (Staphylothermus marinus (strain ATCC 43588 / DSM 3639 / JCM 9404 / F1)).